Consider the following 638-residue polypeptide: MTTETFEFQVEARQLLQLMIHSVYSNKDVFLRELVSNASDALDKLRLAALRDDAPDADVSDLHIELEVDKDARTLTVRDNGIGMSYDEVTRLIGTIANSGTAKFLEELREAKDAAGADGLIGQFGVGFYSGFMVADEVTLVTRHAGETEGTRWTSRGEGTYTLERIGEAPQGTAVTLHLKPADVENQLHDYTSAWKIKEIVKRYSDFITWPVRLLPEPGGDGSDGEGAEAREAETLNSMKALWARPRDEVSDDEYHELYKHIAHDWRDPLETIRLQAEGTFEYQALLFVPSHAPHDLFTQGYQRGVQLYVKRVFIMDDCEELLPPHLRFVKGVVDAQDLSLNVSREILQQDRHIRMIQRRLTKKVLSTVKDLRTSAPDRYATFWREFGAVLKEGLVTDSDNRDAILAACSFASTHDAEEPTALKDYVERMKEGQDDIYYMTGESRQAIENSPHMEAFRAKGVEVLLLTDAVDEVWVDAVGEYEGKTLRSVAKGEIDLSGTEADKSDAEKEKQGEEYAGLLGWMTEHLGEEVKEVRLSSRLTVSPACVVSDAGELTPALENMYRAMGQEVPGAKRILELNPEHQLVKSLNRAWTDRQDRAELTETAELLHALAVLAEGGRPKEPARFVQLMADRLERTL.

Residues 1-345 (MTTETFEFQV…AQDLSLNVSR (345 aa)) are a; substrate-binding. The b stretch occupies residues 346–560 (EILQQDRHIR…AGELTPALEN (215 aa)). Positions 561–638 (MYRAMGQEVP…LMADRLERTL (78 aa)) are c.

This sequence belongs to the heat shock protein 90 family. Homodimer.

Its subcellular location is the cytoplasm. In terms of biological role, molecular chaperone. Has ATPase activity. The chain is Chaperone protein HtpG from Streptomyces coelicolor (strain ATCC BAA-471 / A3(2) / M145).